We begin with the raw amino-acid sequence, 101 residues long: Replication restart protein PriB (101 aa).

The region spanning 1–101 is the SSB domain; sequence MTTNNLVLAG…LHAENVELKT (101 aa).

This sequence belongs to the PriB family. As to quaternary structure, homodimer. Interacts with PriA and DnaT. Component of the replication restart primosome. Primosome assembly occurs via a 'hand-off' mechanism. PriA binds to replication forks, subsequently PriB then DnaT bind; DnaT then displaces ssDNA to generate the helicase loading substrate.

Its function is as follows. Involved in the restart of stalled replication forks, which reloads the replicative helicase on sites other than the origin of replication; the PriA-PriB pathway is the major replication restart pathway. During primosome assembly it facilitates complex formation between PriA and DnaT on DNA; stabilizes PriA on DNA. Stimulates the DNA unwinding activity of PriA helicase. The polypeptide is Replication restart protein PriB (Shewanella piezotolerans (strain WP3 / JCM 13877)).